The following is an 858-amino-acid chain: RNA-directed RNA polymerase 2a (858 aa).

Positions 511–624 constitute a RdRp catalytic domain; the sequence is KHCFEIDLSK…FSVLPPVGDP (114 aa). The span at 772–785 shows a compositional bias: basic and acidic residues; it reads TKQREKKDGIERRR. Residues 772–830 form a disordered region; it reads TKQREKKDGIERRRNDKRRTPTGSYGGGEEAETKVSQAESTGTRSQKSQREGAFKSQAV. The span at 805–817 shows a compositional bias: polar residues; sequence KVSQAESTGTRSQ.

It belongs to the ssRNA positive-strand viruses RNA-directed RNA polymerase family. As to quaternary structure, interacts with replication protein 1a.

The catalysed reaction is RNA(n) + a ribonucleoside 5'-triphosphate = RNA(n+1) + diphosphate. Its function is as follows. RNA-dependent RNA polymerase which replicates the viral genome composed of 3 RNA segments, RNA1, RNA2 and RNA3. This Cucumber mosaic virus (strain As) (CMV) protein is RNA-directed RNA polymerase 2a.